The chain runs to 388 residues: MKWLGLLGLVALSECLVTIPLMKVKSMRENLRENDILLDYLEKHPYRPTYKLLSGQQDPDVSFEPLRNYLDLAYIGIISIGTPPQEFKVVLDTGSADLWVPSIYCSSPACGKHNTFNPLLSSTFLVSGRPINIVYGSGRMSGFLAYDTVQIAGLVDVAQAFGLSLQEPGKFMEYAVFDGILGLSYPSLSFEGITPVFDNLWAQGLISQNLFAFYLSSKEERGSMLMLGGVDPSYYSGDLHWVPVSRPLYWQLAVDRISMNGEAIGCDSGCQGIVDTGTSLLIGPRDPVLNIQKIINAQHSHGGEYIIDCDTISTLPDIIFTIDGVDYPVPASAYIRKSSVHGCYSNFDESAAHESEPYEVWVLGDVFLRLYFTVFDRANNRIGLAPAV.

The first 15 residues, 1–15, serve as a signal peptide directing secretion; sequence MKWLGLLGLVALSEC. Positions 16 to 58 are cleaved as a propeptide — activation peptide; sequence LVTIPLMKVKSMRENLRENDILLDYLEKHPYRPTYKLLSGQQD. A Peptidase A1 domain is found at 74–385; that stretch reads YIGIISIGTP…DRANNRIGLA (312 aa). The active site involves Asp92. 2 disulfide bridges follow: Cys105–Cys110 and Cys266–Cys270. The active site involves Asp275. Cys309 and Cys343 are disulfide-bonded.

This sequence belongs to the peptidase A1 family.

It localises to the secreted. The catalysed reaction is Preferential cleavage: hydrophobic, preferably aromatic, residues in P1 and P1' positions. Cleaves 1-Phe-|-Val-2, 4-Gln-|-His-5, 13-Glu-|-Ala-14, 14-Ala-|-Leu-15, 15-Leu-|-Tyr-16, 16-Tyr-|-Leu-17, 23-Gly-|-Phe-24, 24-Phe-|-Phe-25 and 25-Phe-|-Tyr-26 bonds in the B chain of insulin.. Its function is as follows. Shows particularly broad specificity; although bonds involving phenylalanine and leucine are preferred, many others are also cleaved to some extent. The sequence is that of Pepsin F from Oryctolagus cuniculus (Rabbit).